Here is a 1080-residue protein sequence, read N- to C-terminus: Protein HIR1 (1080 aa).

WD repeat units follow at residues 15–54, 68–107, 129–168, 171–210, 232–275, 278–336, and 340–381; these read QKDF…NADH, HHLG…PSHT, GHDS…KLKT, VHQS…PNAT, PLTT…SEIN, GHEG…PVVI, and VASK…WVAT. Disordered regions lie at residues 430 to 479, 520 to 546, and 1051 to 1080; these read MGDF…NVEK, QLVG…KPSH, and DGED…LEEQ. Residues 442 to 460 are compositionally biased toward polar residues; that stretch reads VTTNGSRPTAKNGEANGTT. Residues 469–496 are a coiled coil; the sequence is KAAPAEENVEKTAERIAELKSRVQVTKD. The segment covering 520–539 has biased composition (polar residues); the sequence is QLVGAKSTKTTQSDTPQTIL.

The protein belongs to the WD repeat HIR1 family.

The protein resides in the nucleus. Its function is as follows. Required for replication-independent chromatin assembly and for the periodic repression of histone gene transcription during the cell cycle. The sequence is that of Protein HIR1 (HIR1) from Chaetomium globosum (strain ATCC 6205 / CBS 148.51 / DSM 1962 / NBRC 6347 / NRRL 1970) (Soil fungus).